The following is a 134-amino-acid chain: uncharacterized protein (134 aa).

The N-terminal stretch at 1-16 is a signal peptide; sequence MAKAVALLLAAIAASA.

This is an uncharacterized protein from Oryza sativa subsp. indica (Rice).